Here is a 146-residue protein sequence, read N- to C-terminus: Anti-sigma F factor (146 aa).

It belongs to the anti-sigma-factor family.

The catalysed reaction is L-seryl-[protein] + ATP = O-phospho-L-seryl-[protein] + ADP + H(+). It carries out the reaction L-threonyl-[protein] + ATP = O-phospho-L-threonyl-[protein] + ADP + H(+). Functionally, binds to sigma F and blocks its ability to form an RNA polymerase holoenzyme (E-sigma F). Phosphorylates SpoIIAA on a serine residue. This phosphorylation may enable SpoIIAA to act as an anti-anti-sigma factor that counteracts SpoIIAB and thus releases sigma F from inhibition. The polypeptide is Anti-sigma F factor (Bacillus licheniformis).